The chain runs to 429 residues: Saccharopine dehydrogenase-like oxidoreductase (429 aa).

Ala-2 is modified (N-acetylalanine). Ser-217 is subject to Phosphoserine.

It belongs to the saccharopine dehydrogenase family.

In Bos taurus (Bovine), this protein is Saccharopine dehydrogenase-like oxidoreductase (SCCPDH).